A 470-amino-acid chain; its full sequence is MVDQVKVVADDQAPAEQSLRRNLTNRHIQLIAIGGAIGTGLFMGSGKTISLAGPSIIFVYMIIGFMLFFVMRAMGELLLSNLEYKSFSDFASDLLGPWAGYFTGWTYWFCWVVTGMADVVAITAYAQFWFPDLSDWVASLAVIVLLLTLNLATVKMFGEMEFWFAMIKIVAIVSLIVVGLVMVAMHFQSPTGVEASFAHLWNDGGWFPKGLSGFFAGFQIAVFAFVGIELVGTTAAETKDPEKSLPRAINSIPIRIIMFYVFALIVIMSVTPWSSVVPEKSPFVELFVLVGLPAAASVINFVVLTSAASSANSGVFSTSRMLFGLAQEGVAPKAFAKLSKRAVPAKGLTFSCICLLGGVVMLYVNPSVIGAFTMITTVSAILFMFVWTIILCSYLVYRKQRPHLHEKSIYKMPLGKLMCWVCMAFFVFVVVLLTLEDDTRQALLVTPLWFIALGLGWLFIGKKRAAELRK.

The next 12 helical transmembrane spans lie at 30-50 (LIAI…KTIS), 51-71 (LAGP…FFVM), 102-122 (FTGW…VVAI), 137-157 (VASL…VKMF), 162-182 (FWFA…GLVM), 211-231 (LSGF…IELV), 256-276 (IIMF…WSSV), 283-303 (FVEL…NFVV), 350-370 (FSCI…SVIG), 371-391 (AFTM…TIIL), 413-433 (PLGK…VVLL), and 441-461 (QALL…LFIG).

Belongs to the amino acid-polyamine-organocation (APC) superfamily. Amino acid transporter (AAT) (TC 2.A.3.1) family.

It is found in the cell inner membrane. It catalyses the reaction D-alanine(in) + H(+)(in) = D-alanine(out) + H(+)(out). It carries out the reaction D-serine(out) + H(+)(out) = D-serine(in) + H(+)(in). The enzyme catalyses glycine(in) + H(+)(in) = glycine(out) + H(+)(out). In terms of biological role, permease that is involved in the transport across the cytoplasmic membrane of D-alanine, D-serine and glycine. In Escherichia coli O157:H7, this protein is D-serine/D-alanine/glycine transporter (cycA).